A 49-amino-acid chain; its full sequence is Small ribosomal subunit protein uS14B (49 aa).

Belongs to the universal ribosomal protein uS14 family. Zinc-binding uS14 subfamily. As to quaternary structure, part of the 30S ribosomal subunit.

Binds 16S rRNA, required for the assembly of 30S particles. The polypeptide is Small ribosomal subunit protein uS14B (Natronomonas pharaonis (strain ATCC 35678 / DSM 2160 / CIP 103997 / JCM 8858 / NBRC 14720 / NCIMB 2260 / Gabara) (Halobacterium pharaonis)).